We begin with the raw amino-acid sequence, 80 residues long: MARKKTLDFEQSLTELQTLVERLESGELSLEESLGAFEQGIRLTRECQTSLSQAEQKVQILLERDGELSEAPFDAEGDEA.

This sequence belongs to the XseB family. Heterooligomer composed of large and small subunits.

It is found in the cytoplasm. It catalyses the reaction Exonucleolytic cleavage in either 5'- to 3'- or 3'- to 5'-direction to yield nucleoside 5'-phosphates.. Its function is as follows. Bidirectionally degrades single-stranded DNA into large acid-insoluble oligonucleotides, which are then degraded further into small acid-soluble oligonucleotides. This is Exodeoxyribonuclease 7 small subunit from Pseudomonas aeruginosa (strain LESB58).